The following is a 920-amino-acid chain: Dynamin-B (920 aa).

Positions 65 to 84 (NSNNNNNNNNNNKINKNNNN) are disordered. The 295-residue stretch at 154–448 (EITLPQIIVV…LTKHIRDTFP (295 aa)) folds into the Dynamin-type G domain. Positions 164 to 171 (GSQSSGKS) are G1 motif. GTP is bound at residue 164 to 172 (GSQSSGKSS). Positions 190-192 (VTR) are G2 motif. Residues 204–241 (TTSRNNVNENEDEDEDDNYYDNDNDDNSLEEWGEFGHT) form a disordered region. Over residues 212–236 (ENEDEDEDDNYYDNDNDDNSLEEWG) the composition is skewed to acidic residues. The interval 290–293 (DLPG) is G3 motif. Positions 359-362 (TKLD) are G4 motif. Residues 359–365 (TKLDLMD) and 390–393 (NRSQ) contribute to the GTP site. Residues 389-392 (VNRS) are G5 motif. The interval 680–790 (FQSTSSTSSS…EIQIQQQQQQ (111 aa)) is disordered. Composition is skewed to low complexity over residues 681-705 (QSTSSTSSSPTSSSSSLPLPQNSNP) and 724-751 (QIKQQQQQQQQQQQQSYQQQQQQQQKQQ). The stretch at 724–751 (QIKQQQQQQQQQQQQSYQQQQQQQQKQQ) forms a coiled coil. Positions 765–774 (PPSPPSPPQP) are enriched in pro residues. Residues 775-790 (KQQQSHEIQIQQQQQQ) show a composition bias toward low complexity. In terms of domain architecture, GED spans 825-916 (IYLLRRLLLA…SLSQSENSDL (92 aa)).

Belongs to the TRAFAC class dynamin-like GTPase superfamily. Dynamin/Fzo/YdjA family.

Its subcellular location is the cytoplasm. Its function is as follows. Enzyme hydrolyzing GTP. The sequence is that of Dynamin-B (dymB) from Dictyostelium discoideum (Social amoeba).